A 504-amino-acid chain; its full sequence is MAAQALALLREVARLEAPLEELRALHSVLQAVPLNELRQQAAELRLGPLFSLLNENHREKTTLCVSILERLLQAMEPVHVARNLRVDLQRGLIHPDDSVKILTLSQIGRIVENSDAVTEILNNAELLKQIVYCIGGENLSVAKAAIKSLSRISLTQAGLEALFESNLLDDLKSVMKTNDIVRYRVYELIIEISSVSPESLNYCTTSGLVTQLLRELTGEDVLVRATCIEMVTSLAYTHHGRQYLAQEGVIDQISNIIVGADSDPFSSFYLPGFVKFFGNLAVMDSPQQICERYPIFVEKVFEMIESQDPTMIGVAVDTVGILGSNVEGKQVLQKTGTRFERLLMRIGHQSKNAPVELKIRCLDAISSLLYLPPEQQTDDLLRMTESWFSSLSRDPLELFRGISSQPFPELHCAALKVFTAIANQPWAQKLMFNSPGFVEYVVDRSVEHDKASKDAKYELVKALANSKTIAEIFGNPNYLRLRTYLSEGPYYVKPVSTTAVEGAE.

A2 carries the post-translational modification N-acetylalanine.

This sequence belongs to the proteasome subunit S5B/HSM3 family. In terms of assembly, interacts with PSMC1, PSMC2, PSMD1 and PSMD6. Part of transient complex containing PSMD5, PSMC2, PSMC1 and PSMD2 formed during the assembly of the 26S proteasome.

Functionally, acts as a chaperone during the assembly of the 26S proteasome, specifically of the base subcomplex of the PA700/19S regulatory complex (RC). In the initial step of the base subcomplex assembly is part of an intermediate PSMD5:PSMC2:PSMC1:PSMD2 module which probably assembles with a PSMD10:PSMC4:PSMC5:PAAF1 module followed by dissociation of PSMD5. This Homo sapiens (Human) protein is 26S proteasome non-ATPase regulatory subunit 5 (PSMD5).